The following is a 175-amino-acid chain: Centrosomal protein 20 (175 aa).

Residues 1 to 104 (MATIAELKAV…IVEDANGKSV (104 aa)) form a necessary and sufficient for homooligomerization and localization to centrosomes and pericentriolar satellites region. A LisH domain is found at 49 to 81 (ENLLINELIREYLEFNKYKYSASVLTAEAGQPE). Positions 137 to 166 (RQNLAKPSTERNQKDRIPEPGRMAGTSIEE) are disordered. A compositionally biased stretch (basic and acidic residues) spans 144–155 (STERNQKDRIPE).

It belongs to the CEP43 family. As to quaternary structure, homooligomer; probably required for localization to centrosomes.

Its subcellular location is the cell projection. The protein localises to the cilium. It localises to the cytoplasm. It is found in the cytoskeleton. The protein resides in the cilium basal body. Its subcellular location is the microtubule organizing center. The protein localises to the centrosome. It localises to the cytoplasmic granule. It is found in the centriolar satellite. Functionally, involved in the biogenesis of cilia. Required for the recruitment of PLK1 to centrosomes and S phase progression. The protein is Centrosomal protein 20 (CEP20) of Gallus gallus (Chicken).